Consider the following 670-residue polypeptide: Receptor for retinol uptake STRA6 (670 aa).

Topologically, residues 1 to 50 (MESQASENGSQTSSGVTDDYSSWYIEEPLGAEEVQPEGVIPLCQLTAPPA) are extracellular. N-linked (GlcNAc...) asparagine glycosylation occurs at asparagine 8. A helical transmembrane segment spans residues 51–71 (LLHACLASLSFLVLLLLALLV). At 72-97 (RRRRLWPRCGHRGLGLPSPVDFLAGD) the chain is on the cytoplasmic side. The chain crosses the membrane as a helical span at residues 98-118 (LSWTVPAAVFVVLFSNLCLLL). At 119–144 (PDENPLPFLNLTAASSPDGEMETSRG) the chain is on the extracellular side. Asparagine 128 carries an N-linked (GlcNAc...) asparagine glycan. Residues 145–165 (PWKLLALLYYPALYYPLAACA) traverse the membrane as a helical segment. Topologically, residues 166-168 (SAG) are cytoplasmic. Residues 169-189 (HQAAFLLGTVLSWAHFGVQVW) traverse the membrane as a helical segment. The Extracellular portion of the chain corresponds to 190 to 205 (QKAECPQDPKIYKHYS). The helical transmembrane segment at 206–226 (LLASLPLLLGLGFLSLWYPVQ) threads the bilayer. Residues 227 to 296 (LVQSLRHRTG…PQPGFRLPLK (70 aa)) lie on the Cytoplasmic side of the membrane. Positions 235 to 294 (TGAGSQGLQTSYSEKYLRTLLCPKKLDSCSHPASKRSLLSRAWAFSHHSIYTPQPGFRLP) are interaction with RBP1. A helical transmembrane segment spans residues 297–317 (LVISATLTGTATYQVALLLLV). At 318-368 (SVVPTVQKVRAGINTDVSYLLAGFGIVLSEDRQEVVELVKHHLWTVEACYI) the chain is on the extracellular side. The chain crosses the membrane as a helical span at residues 369 to 389 (SALVLSCASTFLLLIRSLRTH). Over 390–423 (RANLQALHRGAALDLDPPLQSIHPSRQAIVSWMS) the chain is Cytoplasmic. Residues 424 to 444 (FCAYQTAFSCLGLLVQQVIFF) traverse the membrane as a helical segment. The Extracellular segment spans residues 445 to 474 (LGTTSLAFLVFVPLLHGRNLLLLRSLESTW). Residues 475–495 (PFWLTVALAVILQNIAANWIF) form a helical membrane-spanning segment. The Cytoplasmic segment spans residues 496–510 (LRTHHGYPELTNRRM). An intramembrane region (helical) is located at residues 511–548 (LCVATFLLFPINMLVGAIMAVWRVLISSLYNTVHLGQM). Topologically, residues 549 to 670 (DLSLLPQRAA…TSAKANGTQP (122 aa)) are cytoplasmic. Tyrosine 644 carries the phosphotyrosine modification.

As to quaternary structure, homodimer. Interacts with JAK2 and STAT5. Interacts (via extracellular domains) with RBP4. Interacts (via cytoplasmic domains) with RBP1. Post-translationally, phosphorylated on tyrosine residues in response to RBP4 binding. Phosphorylation requires the presence of LRAT, suggesting it may be triggered by the uptake of retinol that is then metabolized within the cell to retinoids that function as signaling molecules. Widely expressed in the embryo. Detected in adult in the retinal pigment epithelium in the eye. In the adult, is highly expressed in cells that compose blood-organ barriers in the brain (choroid plexus and the brain microvascular), in testis (the basal layer of the seminiferous epithelium), in the yolk sac, and in the chorioallantoic placenta. Detected in white adipose tissue and skeletal muscle, but not in liver (at protein level). Widely expressed in adult, with high expression levels in the eye. Detected in brain, cerebellum, testis, pituitary, pancreas, kidney, spleen, and female genital tract; and at very low levels in heart and lung. Not detected in liver.

The protein resides in the cell membrane. Functionally, functions as a retinol transporter. Accepts all-trans retinol from the extracellular retinol-binding protein RBP4, facilitates retinol transport across the cell membrane, and then transfers retinol to the cytoplasmic retinol-binding protein RBP1. Retinol uptake is enhanced by LRAT, an enzyme that converts retinol to all-trans retinyl esters, the storage forms of vitamin A. Contributes to the activation of a signaling cascade that depends on retinol transport and LRAT-dependent generation of retinol metabolites that then trigger activation of JAK2 and its target STAT5, and ultimately increase the expression of SOCS3 and inhibit cellular responses to insulin. Important for the homeostasis of vitamin A and its derivatives, such as retinoic acid and 11-cis-retinal. STRA6-mediated transport is particularly important in the eye, and under conditions of dietary vitamin A deficiency. Does not transport retinoic acid. The protein is Receptor for retinol uptake STRA6 (Stra6) of Mus musculus (Mouse).